Reading from the N-terminus, the 488-residue chain is Protein unzipped (488 aa).

An N-terminal signal peptide occupies residues 1–21; it reads MTSNSCLISLGLLLVLIQILA. Residues 22-465 are Extracellular-facing; it reads PAKAAEHSVF…DVALAGFGVN (444 aa). Asn35, Asn232, Asn317, and Asn374 each carry an N-linked (GlcNAc...) asparagine glycan. The span at 380–400 shows a compositional bias: low complexity; the sequence is TTTTTTTTSTSTTTHATTTST. The disordered stretch occupies residues 380–453; sequence TTTTTTTTST…EAPENMSSDP (74 aa). An N-linked (GlcNAc...) asparagine glycan is attached at Asn448. A helical transmembrane segment spans residues 466–486; that stretch reads AAGSTFIAGSALLTLLLTIFL. The Cytoplasmic portion of the chain corresponds to 487-488; the sequence is SL.

It is found in the membrane. Required for normal axon patterning during neurogenesis. In Drosophila melanogaster (Fruit fly), this protein is Protein unzipped (uzip).